The primary structure comprises 295 residues: MKKPAYIGRFAPTPSGYLHFGSLVAALASYLDARAVGGQWLLRMEDLDPPREVAGAQVAILETLERYGFEWDGEMVRQSERHDAYADILQRWFNHGLAYACTCSRKQLEAFEGVYPGFCRDAGHAAENAAIRIRVPELEYRFEDRVQGTFHMHLGRESGDFVIRRRDGLYAYQLAVVIDDAWQGVTDIVRGADLLDSTPRHLYLQELLGLPQPRYLHVPLITQPDGHKLGKSYRSPPLPADQATPLLLRALRALGQPVDAHMADGTAQEVLAWGIRHWNASLIPRQRTIEEARIA.

Residues 9–13 and glutamate 45 each bind L-glutamate; that span reads RFAPT. A 'HIGH' region motif is present at residues 12–22; the sequence is PTPSGYLHFGS. The Zn(2+) site is built by cysteine 101, cysteine 103, tyrosine 115, and cysteine 119. L-glutamate is bound by residues tyrosine 172 and arginine 190. The 'KMSKS' region signature appears at 228–232; the sequence is KLGKS. Lysine 231 is a binding site for ATP.

Belongs to the class-I aminoacyl-tRNA synthetase family. GluQ subfamily. Zn(2+) serves as cofactor.

In terms of biological role, catalyzes the tRNA-independent activation of glutamate in presence of ATP and the subsequent transfer of glutamate onto a tRNA(Asp). Glutamate is transferred on the 2-amino-5-(4,5-dihydroxy-2-cyclopenten-1-yl) moiety of the queuosine in the wobble position of the QUC anticodon. The protein is Glutamyl-Q tRNA(Asp) synthetase of Pseudomonas syringae pv. tomato (strain ATCC BAA-871 / DC3000).